Here is a 562-residue protein sequence, read N- to C-terminus: Delta-1-pyrroline-5-carboxylate dehydrogenase, mitochondrial (562 aa).

The N-terminal 23 residues, 1 to 23, are a transit peptide targeting the mitochondrion; it reads MLPLPSLRRSLLSHAWRGAGLRW. N6-succinyllysine is present on Lys30. Ser43 is modified (phosphoserine). An N6-acetyllysine modification is found at Lys51. N6-acetyllysine; alternate occurs at positions 92, 98, 113, 129, and 174. An N6-succinyllysine; alternate mark is found at Lys92, Lys98, Lys113, Lys129, and Lys174. NAD(+) contacts are provided by residues Ser207, Lys232, and 285-289; that span reads GSVPT. Glu313 (proton acceptor) is an active-site residue. N6-acetyllysine is present on Lys317. Lys346 is modified (N6-succinyllysine). The active-site Nucleophile is Cys347. The residue at position 357 (Lys357) is an N6-acetyllysine; alternate. N6-succinyllysine; alternate is present on Lys357. N6-acetyllysine is present on residues Lys364 and Lys375. Position 394 is an N6-succinyllysine (Lys394). Residue Glu446 participates in NAD(+) binding. Lys461 carries the N6-acetyllysine modification. Residue Lys508 is modified to N6-acetyllysine; alternate. Lys508 is modified (N6-succinyllysine; alternate). Ser512 serves as a coordination point for substrate. An N6-acetyllysine mark is found at Lys530 and Lys551.

The protein belongs to the aldehyde dehydrogenase family. As to quaternary structure, homodimer. Post-translationally, acetylation of Lys-98, Lys-113 and Lys-401 is observed in liver mitochondria from fasted mice but not from fed mice.

It is found in the mitochondrion matrix. It carries out the reaction L-glutamate 5-semialdehyde + NAD(+) + H2O = L-glutamate + NADH + 2 H(+). The protein operates within amino-acid degradation; L-proline degradation into L-glutamate; L-glutamate from L-proline: step 2/2. Functionally, irreversible conversion of delta-1-pyrroline-5-carboxylate (P5C), derived either from proline or ornithine, to glutamate. This is a necessary step in the pathway interconnecting the urea and tricarboxylic acid cycles. The preferred substrate is glutamic gamma-semialdehyde, other substrates include succinic, glutaric and adipic semialdehydes. This Mus musculus (Mouse) protein is Delta-1-pyrroline-5-carboxylate dehydrogenase, mitochondrial (Aldh4a1).